The sequence spans 345 residues: Phosphate acyltransferase (345 aa).

The protein belongs to the PlsX family. In terms of assembly, homodimer. Probably interacts with PlsY.

The protein resides in the cytoplasm. It carries out the reaction a fatty acyl-[ACP] + phosphate = an acyl phosphate + holo-[ACP]. The protein operates within lipid metabolism; phospholipid metabolism. Catalyzes the reversible formation of acyl-phosphate (acyl-PO(4)) from acyl-[acyl-carrier-protein] (acyl-ACP). This enzyme utilizes acyl-ACP as fatty acyl donor, but not acyl-CoA. This chain is Phosphate acyltransferase, found in Trichlorobacter lovleyi (strain ATCC BAA-1151 / DSM 17278 / SZ) (Geobacter lovleyi).